The sequence spans 372 residues: Sesquiterpene synthase Agr9 (372 aa).

4 residues coordinate Mg(2+): aspartate 87, asparagine 225, serine 229, and glutamate 233. Positions 87-91 match the DDXXD motif motif; that stretch reads DEYTD. (2E,6E)-farnesyl diphosphate-binding residues include arginine 314 and tyrosine 315.

It belongs to the terpene synthase family. It depends on Mg(2+) as a cofactor.

It catalyses the reaction (2E,6E)-farnesyl diphosphate = gamma-muurolene + diphosphate. The catalysed reaction is (2E,6E)-farnesyl diphosphate = delta-cadinene + diphosphate. Terpene cyclase that catalyzes the cyclization of farnesyl diphosphate (FPP) to various sesquiterpenes, including gamma-muurolene, beta-cadinene and delta-cadinene. This chain is Sesquiterpene synthase Agr9, found in Cyclocybe aegerita (Black poplar mushroom).